The primary structure comprises 317 residues: U5 small nuclear ribonucleoprotein TSSC4 (317 aa).

Acidic residues predominate over residues 1-19 (MAETEAGLEVEEPTEDDTL). A disordered region spans residues 1–78 (MAETEAGLEV…IPTTAVQPFH (78 aa)). The segment covering 20–37 (PSDTVSLSDSDSDLSLPS) has biased composition (low complexity). Phosphoserine is present on residues Ser57, Ser64, Ser83, and Ser92. The tract at residues 74-101 (VQPFHLRGMSSTFSQRSHSIFDCLESAA) is hom2; mediates interaction with the U5 snRNP complexes and required for spliceosomal tri-snRNP complex assembly. The interval 123–151 (VAPPSQTPARSLSRVHGNTDPTRVHPVPD) is disordered. The interval 146–300 (VHPVPDYVSH…SKKRSRDHFR (155 aa)) is interaction with SNRNP200. The hom3; mediates interaction with the U5 snRNP complexes stretch occupies residues 147-183 (HPVPDYVSHPERWTKYSLEDVSETSEQSNRDAALAFL). Residues 198-238 (FNQDPSSCGEGRVVFTKPVRGSEARAERKRVLKKGVVSGAG) form a hom4; necessary for interaction with the PRPF19 complex and required for spliceosomal tri-snRNP complex assembly region. Lys214 is modified (N6-acetyllysine). The disordered stretch occupies residues 247–317 (HLAGPEAEEW…GPGSERGPSV (71 aa)).

This sequence belongs to the TSSC4 family. In terms of assembly, interacts in a RNA-independent manner with distinct U5 snRNP-containing complexes, the mono-U5 snRNP and the post-splicing U5 snRNP-PRPF19 complex. Interacts with SNRNP200; the interaction is direct, excludes recruitment of C9ORF78 and WBP4 to SNRNP200 and negatively regulates its RNA helicase activity. Interacts with PRPF8; the interaction is direct.

It localises to the nucleus. It is found in the cytoplasm. Functionally, protein associated with the U5 snRNP, during its maturation and its post-splicing recycling and which is required for spliceosomal tri-snRNP complex assembly in the nucleus. Has a molecular sequestering activity and transiently hinders SNRNP200 binding sites for constitutive splicing factors that intervene later during the assembly of the spliceosome and splicing. Together with its molecular sequestering activity, may also function as a molecular adapter and placeholder, coordinating the assembly of the U5 snRNP and its association with the U4/U6 di-snRNP. The sequence is that of U5 small nuclear ribonucleoprotein TSSC4 from Rattus norvegicus (Rat).